Reading from the N-terminus, the 87-residue chain is Selenoprotein W (87 aa).

The segment at residues 10–13 is a cross-link (cysteinyl-selenocysteine (Cys-Sec); redox-active); the sequence is CGAU. Position 13 (Sec-13) is a non-standard amino acid, selenocysteine. Cys-37 carries the post-translational modification S-glutathionyl cysteine.

It belongs to the SelWTH family. Selenoprotein W subfamily. In terms of assembly, interacts with DPYSL2, PRDX1, YWHAB, YWHAG, HSP70 and HSP90.

The protein resides in the cytoplasm. Plays a role as a glutathione (GSH)-dependent antioxidant. May be involved in a redox-related process. May play a role in the myopathies of selenium deficiency. The chain is Selenoprotein W from Sus scrofa (Pig).